A 410-amino-acid chain; its full sequence is Platelet-activating factor acetylhydrolase IB subunit alpha (410 aa).

Residues 1 to 38 (MVLSQRQRDELNRAIADYLRSNGYEEAYSVFKKEAELD) are required for self-association and interaction with PAFAH1B2 and PAFAH1B3. Residues 1–66 (MVLSQRQRDE…SVIRLQKKVM (66 aa)) form an interaction with NDE1 region. The interaction with NDEL1 stretch occupies residues 1 to 102 (MVLSQRQRDE…EWIPRPPEKY (102 aa)). In terms of domain architecture, LisH spans 7–39 (QRDELNRAIADYLRSNGYEEAYSVFKKEAELDM). The residue at position 53 (K53) is an N6-acetyllysine. Residues 56 to 82 (TSVIRLQKKVMELESKLNEAKEEFTSG) adopt a coiled-coil conformation. An interaction with dynein and dynactin region spans residues 83 to 410 (GPLGQKRDPK…DQTVKVWECR (328 aa)). WD repeat units lie at residues 106–147 (GHRS…RTLK), 148–187 (GHTD…CIRT), 190–229 (GHDH…CVKT), 232–271 (GHRE…CKAE), 274–333 (EHEH…CLMT), 336–377 (GHDN…KTLN), and 378–410 (AHEH…WECR). S109 carries the post-translational modification Phosphoserine. Positions 367 to 409 (YKNKRCMKTLNAHEHFVTSLDFHKTAPYVVTGSVDQTVKVWEC) are interaction with DCX. The segment at 388 to 410 (FHKTAPYVVTGSVDQTVKVWECR) is interaction with NDEL1.

This sequence belongs to the WD repeat LIS1/nudF family. In terms of assembly, can self-associate. Component of the cytosolic PAF-AH (I) heterotetrameric enzyme, which is composed of PAFAH1B1 (beta), PAFAH1B2 (alpha2) and PAFAH1B3 (alpha1) subunits. The catalytic activity of the enzyme resides in the alpha1 (PAFAH1B3) and alpha2 (PAFAH1B2) subunits, whereas the beta subunit (PAFAH1B1) has regulatory activity. Trimer formation is not essential for the catalytic activity. Interacts with the catalytic dimer of PAF-AH (I) heterotetrameric enzyme: interacts with PAFAH1B2 homodimer (alpha2/alpha2 homodimer), PAFAH1B3 homodimer (alpha1/alpha1 homodimer) and PAFAH1B2-PAFAH1B3 heterodimer (alpha2/alpha1 heterodimer). Interacts with DCX, dynein, dynactin, IQGAP1, KATNB1, NDE1, NDEL1, NUDC and RSN. Interacts with DISC1, and this interaction is enhanced by NDEL1. Interacts with DAB1 when DAB1 is phosphorylated in response to RELN/reelin signaling. Interacts with INTS13. Interacts with DCDC1.

The protein localises to the cytoplasm. The protein resides in the cytoskeleton. It is found in the microtubule organizing center. Its subcellular location is the centrosome. It localises to the spindle. The protein localises to the nucleus membrane. Regulatory subunit (beta subunit) of the cytosolic type I platelet-activating factor (PAF) acetylhydrolase (PAF-AH (I)), an enzyme that catalyzes the hydrolyze of the acetyl group at the sn-2 position of PAF and its analogs and participates in PAF inactivation. Regulates the PAF-AH (I) activity in a catalytic dimer composition-dependent manner. Positively regulates the activity of the minus-end directed microtubule motor protein dynein. May enhance dynein-mediated microtubule sliding by targeting dynein to the microtubule plus end. Required for several dynein- and microtubule-dependent processes such as the maintenance of Golgi integrity, the peripheral transport of microtubule fragments and the coupling of the nucleus and centrosome. Required during brain development for the proliferation of neuronal precursors and the migration of newly formed neurons from the ventricular/subventricular zone toward the cortical plate. Neuronal migration involves a process called nucleokinesis, whereby migrating cells extend an anterior process into which the nucleus subsequently translocates. During nucleokinesis dynein at the nuclear surface may translocate the nucleus towards the centrosome by exerting force on centrosomal microtubules. Also required for proper activation of Rho GTPases and actin polymerization at the leading edge of locomoting cerebellar neurons and postmigratory hippocampal neurons in response to calcium influx triggered via NMDA receptors. May also play a role in other forms of cell locomotion including the migration of fibroblasts during wound healing. Required for dynein recruitment to microtubule plus ends and BICD2-bound cargos. May modulate the Reelin pathway through interaction of the PAF-AH (I) catalytic dimer with VLDLR. This is Platelet-activating factor acetylhydrolase IB subunit alpha from Macaca fascicularis (Crab-eating macaque).